The sequence spans 556 residues: 2-succinyl-5-enolpyruvyl-6-hydroxy-3-cyclohexene-1-carboxylate synthase (556 aa).

Belongs to the TPP enzyme family. MenD subfamily. In terms of assembly, homodimer. The cofactor is Mg(2+). Mn(2+) serves as cofactor. Requires thiamine diphosphate as cofactor.

The catalysed reaction is isochorismate + 2-oxoglutarate + H(+) = 5-enolpyruvoyl-6-hydroxy-2-succinyl-cyclohex-3-ene-1-carboxylate + CO2. It participates in quinol/quinone metabolism; 1,4-dihydroxy-2-naphthoate biosynthesis; 1,4-dihydroxy-2-naphthoate from chorismate: step 2/7. The protein operates within quinol/quinone metabolism; menaquinone biosynthesis. Functionally, catalyzes the thiamine diphosphate-dependent decarboxylation of 2-oxoglutarate and the subsequent addition of the resulting succinic semialdehyde-thiamine pyrophosphate anion to isochorismate to yield 2-succinyl-5-enolpyruvyl-6-hydroxy-3-cyclohexene-1-carboxylate (SEPHCHC). This chain is 2-succinyl-5-enolpyruvyl-6-hydroxy-3-cyclohexene-1-carboxylate synthase, found in Shigella boydii serotype 18 (strain CDC 3083-94 / BS512).